A 199-amino-acid chain; its full sequence is Pyridoxine/pyridoxamine 5'-phosphate oxidase (199 aa).

Residues 44–49, 59–60, Lys66, and Gln91 contribute to the FMN site; these read RTVLLK and YT. Residue Lys49 coordinates substrate. 3 residues coordinate substrate: Tyr109, Arg113, and Ser117. Residues 126 to 127 and Trp171 each bind FMN; that span reads QS. Residue 177–179 coordinates substrate; the sequence is RLH. Arg181 is a binding site for FMN.

It belongs to the pyridoxamine 5'-phosphate oxidase family. As to quaternary structure, homodimer. Requires FMN as cofactor.

It carries out the reaction pyridoxamine 5'-phosphate + O2 + H2O = pyridoxal 5'-phosphate + H2O2 + NH4(+). The catalysed reaction is pyridoxine 5'-phosphate + O2 = pyridoxal 5'-phosphate + H2O2. Its pathway is cofactor metabolism; pyridoxal 5'-phosphate salvage; pyridoxal 5'-phosphate from pyridoxamine 5'-phosphate: step 1/1. The protein operates within cofactor metabolism; pyridoxal 5'-phosphate salvage; pyridoxal 5'-phosphate from pyridoxine 5'-phosphate: step 1/1. Functionally, catalyzes the oxidation of either pyridoxine 5'-phosphate (PNP) or pyridoxamine 5'-phosphate (PMP) into pyridoxal 5'-phosphate (PLP). This is Pyridoxine/pyridoxamine 5'-phosphate oxidase from Xanthomonas euvesicatoria pv. vesicatoria (strain 85-10) (Xanthomonas campestris pv. vesicatoria).